The sequence spans 445 residues: Methionine aminopeptidase 2-1 (445 aa).

A disordered region spans residues 1-86; it reads MAAQASEDLQ…VQSEPPRVPL (86 aa). Over residues 34 to 46 the composition is skewed to acidic residues; the sequence is GEAEDDSDDDADE. Basic residues predominate over residues 59–74; the sequence is AKKKKKRKSKKKKKGG. Residue H198 participates in substrate binding. A divalent metal cation is bound by residues D218, D229, and H298. H306 provides a ligand contact to substrate. A divalent metal cation-binding residues include E331 and E426.

The protein belongs to the peptidase M24A family. Methionine aminopeptidase eukaryotic type 2 subfamily. The cofactor is Co(2+). Zn(2+) is required as a cofactor. Requires Mn(2+) as cofactor. It depends on Fe(2+) as a cofactor.

It localises to the cytoplasm. It catalyses the reaction Release of N-terminal amino acids, preferentially methionine, from peptides and arylamides.. Cotranslationally removes the N-terminal methionine from nascent proteins. The N-terminal methionine is often cleaved when the second residue in the primary sequence is small and uncharged (Met-Ala-, Cys, Gly, Pro, Ser, Thr, or Val). The sequence is that of Methionine aminopeptidase 2-1 from Aspergillus flavus (strain ATCC 200026 / FGSC A1120 / IAM 13836 / NRRL 3357 / JCM 12722 / SRRC 167).